The primary structure comprises 75 residues: Large ribosomal subunit protein bL31 (75 aa).

Zn(2+)-binding residues include cysteine 16, cysteine 18, cysteine 38, and cysteine 41.

This sequence belongs to the bacterial ribosomal protein bL31 family. Type A subfamily. Part of the 50S ribosomal subunit. Zn(2+) serves as cofactor.

Functionally, binds the 23S rRNA. This Mycolicibacterium smegmatis (strain ATCC 700084 / mc(2)155) (Mycobacterium smegmatis) protein is Large ribosomal subunit protein bL31.